Here is a 779-residue protein sequence, read N- to C-terminus: Phosphoribosylformylglycinamidine synthase subunit PurL (779 aa).

The active site involves histidine 52. ATP contacts are provided by tyrosine 55 and lysine 94. Glutamate 96 is a Mg(2+) binding site. Residues serine 97–histidine 100 and arginine 119 each bind substrate. Histidine 98 serves as the catalytic Proton acceptor. Position 120 (aspartate 120) interacts with Mg(2+). A substrate-binding site is contributed by glutamine 243. Aspartate 271 lines the Mg(2+) pocket. Glutamate 315–glutamine 317 provides a ligand contact to substrate. Positions 523 and 560 each coordinate ATP. Asparagine 561 lines the Mg(2+) pocket. Serine 563 is a substrate binding site.

It belongs to the FGAMS family. Monomer. Part of the FGAM synthase complex composed of 1 PurL, 1 PurQ and 2 PurS subunits.

The protein resides in the cytoplasm. The catalysed reaction is N(2)-formyl-N(1)-(5-phospho-beta-D-ribosyl)glycinamide + L-glutamine + ATP + H2O = 2-formamido-N(1)-(5-O-phospho-beta-D-ribosyl)acetamidine + L-glutamate + ADP + phosphate + H(+). The protein operates within purine metabolism; IMP biosynthesis via de novo pathway; 5-amino-1-(5-phospho-D-ribosyl)imidazole from N(2)-formyl-N(1)-(5-phospho-D-ribosyl)glycinamide: step 1/2. Part of the phosphoribosylformylglycinamidine synthase complex involved in the purines biosynthetic pathway. Catalyzes the ATP-dependent conversion of formylglycinamide ribonucleotide (FGAR) and glutamine to yield formylglycinamidine ribonucleotide (FGAM) and glutamate. The FGAM synthase complex is composed of three subunits. PurQ produces an ammonia molecule by converting glutamine to glutamate. PurL transfers the ammonia molecule to FGAR to form FGAM in an ATP-dependent manner. PurS interacts with PurQ and PurL and is thought to assist in the transfer of the ammonia molecule from PurQ to PurL. This Prochlorococcus marinus (strain AS9601) protein is Phosphoribosylformylglycinamidine synthase subunit PurL.